The primary structure comprises 301 residues: Probable deoxyhypusine synthase 1 (301 aa).

Lys-269 acts as the Nucleophile in catalysis.

The protein belongs to the deoxyhypusine synthase family. NAD(+) serves as cofactor.

It carries out the reaction [eIF5A protein]-L-lysine + spermidine = [eIF5A protein]-deoxyhypusine + propane-1,3-diamine. It functions in the pathway protein modification; eIF5A hypusination. Functionally, catalyzes the NAD-dependent oxidative cleavage of spermidine and the subsequent transfer of the butylamine moiety of spermidine to the epsilon-amino group of a specific lysine residue of the eIF-5A precursor protein to form the intermediate deoxyhypusine residue. This is Probable deoxyhypusine synthase 1 (dys1) from Archaeoglobus fulgidus (strain ATCC 49558 / DSM 4304 / JCM 9628 / NBRC 100126 / VC-16).